The primary structure comprises 466 residues: Catalase ifgD (466 aa).

Positions 1–22 (MAPNYAKKCPVMGKAPSSGHSS) are disordered. Residue His48 is part of the active site. Residue Tyr337 participates in heme binding.

This sequence belongs to the catalase family. Requires heme as cofactor.

It functions in the pathway alkaloid biosynthesis; ergot alkaloid biosynthesis. In terms of biological role, catalase; part of the gene cluster that mediates the biosynthesis of isofumigaclavines, fungal ergot alkaloids. The tryptophan dimethylallyltransferase ifgA catalyzes the first step of ergot alkaloid biosynthesis by condensing dimethylallyl diphosphate (DMAP) and tryptophan to form 4-dimethylallyl-L-tryptophan. The second step is catalyzed by the methyltransferase ifgB that methylates 4-dimethylallyl-L-tryptophan in the presence of S-adenosyl-L-methionine, resulting in the formation of N-methyl-dimethylallyl-L-tryptophan. The catalase ifgD and the FAD-dependent oxidoreductase ifgC then transform N-methyl-dimethylallyl-L-tryptophan to chanoclavine-I which is further oxidized by ifgE in the presence of NAD(+), resulting in the formation of chanoclavine-I aldehyde. The chanoclavine-I aldehyde reductases ifgG and/or fgaOx3 reduce chanoclavine-I aldehyde to dihydrochanoclavine-I aldehyde that spontaneously dehydrates to form 6,8-dimethyl-6,7-didehydroergoline. The festuclavine dehydrogenases ifgF1 and/or ifgF2 then catalyze the reduction of 6,8-dimethyl-6,7-didehydroergoline to form festuclavine. Hydrolysis of festuclavine by a yet undetermined cytochrome P450 monooxygenase (called ifgH) then leads to the formation of isofumigaclavine B which is in turn acetylated by ifgI to isofumigaclavine A. Penicillium roqueforti has interestingly at least two sets of genes for the consumption of chanoclavine-I aldehyde on three different loci, the OYEs ifgG/fgaOx3 and the festuclavine synthase homologs ifgF1/ifgF2. The reason for the duplication of these genes is unclear, probably to ensure the conversion of chanoclavine-I aldehyde by differential gene expression under various environmental conditions. The chain is Catalase ifgD from Penicillium roqueforti (strain FM164).